We begin with the raw amino-acid sequence, 243 residues long: Proteasome subunit alpha (243 aa).

The protein belongs to the peptidase T1A family. The 20S proteasome core is composed of 14 alpha and 14 beta subunits that assemble into four stacked heptameric rings, resulting in a barrel-shaped structure. The two inner rings, each composed of seven catalytic beta subunits, are sandwiched by two outer rings, each composed of seven alpha subunits. The catalytic chamber with the active sites is on the inside of the barrel. Has a gated structure, the ends of the cylinder being occluded by the N-termini of the alpha-subunits. Is capped at one or both ends by the proteasome regulatory ATPase, PAN.

It is found in the cytoplasm. With respect to regulation, the formation of the proteasomal ATPase PAN-20S proteasome complex, via the docking of the C-termini of PAN into the intersubunit pockets in the alpha-rings, triggers opening of the gate for substrate entry. Interconversion between the open-gate and close-gate conformations leads to a dynamic regulation of the 20S proteasome proteolysis activity. Functionally, component of the proteasome core, a large protease complex with broad specificity involved in protein degradation. The polypeptide is Proteasome subunit alpha (Pyrobaculum aerophilum (strain ATCC 51768 / DSM 7523 / JCM 9630 / CIP 104966 / NBRC 100827 / IM2)).